The chain runs to 440 residues: ATP-dependent protease ATPase subunit HslU (440 aa).

ATP is bound by residues Ile-18, 60 to 65, Asp-253, Glu-318, and Arg-390; that span reads GVGKTE.

It belongs to the ClpX chaperone family. HslU subfamily. As to quaternary structure, a double ring-shaped homohexamer of HslV is capped on each side by a ring-shaped HslU homohexamer. The assembly of the HslU/HslV complex is dependent on binding of ATP.

It is found in the cytoplasm. In terms of biological role, ATPase subunit of a proteasome-like degradation complex; this subunit has chaperone activity. The binding of ATP and its subsequent hydrolysis by HslU are essential for unfolding of protein substrates subsequently hydrolyzed by HslV. HslU recognizes the N-terminal part of its protein substrates and unfolds these before they are guided to HslV for hydrolysis. The chain is ATP-dependent protease ATPase subunit HslU from Shewanella oneidensis (strain ATCC 700550 / JCM 31522 / CIP 106686 / LMG 19005 / NCIMB 14063 / MR-1).